A 350-amino-acid polypeptide reads, in one-letter code: MLGSVKMEAHDLAEWSYYPEAGEVYSPVTPVPTMAPLNSYMTLNPLSSPYPPGGLPASPLPSGPLAPPAPAAPLGPTFPGLGVSGGSSSSGYGAPGPGLVHGKEMPKGYRRPLAHAKPPYSYISLITMAIQQAPGKMLTLSEIYQWIMDLFPYYRENQQRWQNSIRHSLSFNDCFVKVARSPDKPGKGSYWALHPSSGNMFENGCYLRRQKRFKLEEKVKKGGSGAATTTRNGTGSAASTTTPAATVTSPPQPPPPAPEPEAQGGEDVGALDCGSPASSTPYFTGLELPGELKLDAPYNFNHPFSINNLMSEQTPAPPKLDVGFGGYGAEGGEPGVYYQGLYSRSLLNAS.

The segment at residues 116 to 207 (AKPPYSYISL…GNMFENGCYL (92 aa)) is a DNA-binding region (fork-head). A disordered region spans residues 217 to 276 (EKVKKGGSGAATTTRNGTGSAASTTTPAATVTSPPQPPPPAPEPEAQGGEDVGALDCGSP). Low complexity predominate over residues 226–249 (AATTTRNGTGSAASTTTPAATVTS). Positions 250–259 (PPQPPPPAPE) are enriched in pro residues.

Interacts with FOXA2. In terms of tissue distribution, expressed in erythroleukemia and hepatoma cell lines and in liver and pancreas. Not expressed in any other cell lines or tissues examined.

The protein localises to the nucleus. In terms of biological role, transcription factor that is thought to act as a 'pioneer' factor opening the compacted chromatin for other proteins through interactions with nucleosomal core histones and thereby replacing linker histones at target enhancer and/or promoter sites. Originally described as a transcription activator for a number of liver genes such as AFP, albumin, tyrosine aminotransferase, PEPCK, etc. Interacts with the cis-acting regulatory regions of these genes. Involved in glucose homeostasis; binds to and activates transcription from the G6PC1 promoter. Binds to the CYP3A4 promoter and activates its transcription in cooperation with CEBPA. Binds to the CYP3A7 promoter together with members of the CTF/NF-I family. Involved in regulation of neuronal-specific transcription. May be involved in regulation of spermatogenesis. The sequence is that of Hepatocyte nuclear factor 3-gamma (FOXA3) from Homo sapiens (Human).